Consider the following 520-residue polypeptide: Apolipoprotein N-acyltransferase (520 aa).

Helical transmembrane passes span 12–32 (IFTY…FSPF), 33–53 (DYWG…KTAE), 58–78 (LWSA…WVHV), 93–113 (VLVL…AYLI), 122–142 (AMFP…FTGF), 168–188 (VTFF…VLLI), and 193–213 (WNVV…SAYS). The region spanning 232–479 (AQGNIEQNLK…ETTLTHKVAA (248 aa)) is the CN hydrolase domain. Catalysis depends on E272, which acts as the Proton acceptor. Residue K338 is part of the active site. The Nucleophile role is filled by C390. The helical transmembrane segment at 484–504 (TPYAVFGNTAIYGLSLLLLLM) threads the bilayer.

This sequence belongs to the CN hydrolase family. Apolipoprotein N-acyltransferase subfamily.

Its subcellular location is the cell inner membrane. It catalyses the reaction N-terminal S-1,2-diacyl-sn-glyceryl-L-cysteinyl-[lipoprotein] + a glycerophospholipid = N-acyl-S-1,2-diacyl-sn-glyceryl-L-cysteinyl-[lipoprotein] + a 2-acyl-sn-glycero-3-phospholipid + H(+). The protein operates within protein modification; lipoprotein biosynthesis (N-acyl transfer). Functionally, catalyzes the phospholipid dependent N-acylation of the N-terminal cysteine of apolipoprotein, the last step in lipoprotein maturation. The protein is Apolipoprotein N-acyltransferase of Pasteurella multocida (strain Pm70).